The chain runs to 368 residues: D-alanine--D-alanine ligase (368 aa).

The ATP-grasp domain occupies K151–D358. R179–E234 is a binding site for ATP. D313, E325, and N327 together coordinate Mg(2+).

Belongs to the D-alanine--D-alanine ligase family. Mg(2+) is required as a cofactor. Requires Mn(2+) as cofactor.

It localises to the cytoplasm. It carries out the reaction 2 D-alanine + ATP = D-alanyl-D-alanine + ADP + phosphate + H(+). It functions in the pathway cell wall biogenesis; peptidoglycan biosynthesis. Functionally, cell wall formation. This chain is D-alanine--D-alanine ligase, found in Rhodococcus opacus (strain B4).